A 117-amino-acid polypeptide reads, in one-letter code: Transcription elongation factor A protein-like 8 (117 aa).

2 stretches are compositionally biased toward basic and acidic residues: residues 1–24 (MQKS…DRPL) and 61–74 (YKED…DPEE). The tract at residues 1-74 (MQKSCGENER…SPVRHLDPEE (74 aa)) is disordered. Positions 73–100 (EEMIRGADELERLREEIRRVRNKFVMMH) form a coiled coil.

It belongs to the TFS-II family. TFA subfamily.

It is found in the nucleus. May be involved in transcriptional regulation. The polypeptide is Transcription elongation factor A protein-like 8 (TCEAL8) (Bos taurus (Bovine)).